The sequence spans 690 residues: Signal peptide peptidase-like 2C (690 aa).

A signal peptide spans 1 to 28 (MACLGSLHPLGSLLLLFLLLLLSPEARG). The Lumenal segment spans residues 29-192 (EYGLVRVVSK…APLEPVTDYN (164 aa)). Positions 87 to 166 (DSSPRQRPLH…AVLRYTDMLD (80 aa)) constitute a PA domain. N106 carries N-linked (GlcNAc...) asparagine glycosylation. A helical transmembrane segment spans residues 193–213 (MAIIFILAVGTVAAGGYWAGL). At 214–260 (MEANKLQRRQAQRGGGLGGHNQQQTVAAERSQRAWEDDDFEDAPMDF) the chain is on the cytoplasmic side. Residues 261–283 (TPAMTGAVVTMSCSIMILLYFFY) form a helical membrane-spanning segment. Position 284 (D284) is a topological domain, lumenal. Residues 285-307 (CFVYVMIGIFSLGASTGLYSCLA) form a helical membrane-spanning segment. Residues 308 to 328 (PILCHLPLWRYQWVLPGQRVS) are Cytoplasmic-facing. The helical transmembrane segment at 329–349 (VTWPLLLLAGLCAMVTVLWVI) threads the bilayer. Topologically, residues 350-354 (HRNED) are lumenal. Residues 355-373 (HWAWLLQDTLGVAYCLFVL) form a helical membrane-spanning segment. At 374–384 (RRVRLPTFKNC) the chain is on the cytoplasmic side. A helical membrane pass occupies residues 385–405 (TLFLLALLAFDVFFVFITPLF). D395 is a catalytic residue. The Lumenal segment spans residues 406–448 (TKTGESIMVEVASGPADSSSHERLPMVLKVPRLSFSALTLCNQ). The chain crosses the membrane as a helical span at residues 449–469 (PFSILGFGDIVVPGFLVAYCH). Residue D457 is part of the active site. The Cytoplasmic segment spans residues 470–482 (RFDMQVQSRQVYY). A helical transmembrane segment spans residues 483-503 (MACTVAYAVGLLVTFVAMILM). Residue Q504 is a topological domain, lumenal. A helical transmembrane segment spans residues 505 to 525 (MGQPALLYLVSSTLLTSLAVA). A PAL motif is present at residues 508 to 510 (PAL). Residues 526–690 (TCRQEFTLFW…KKSMSAQAPL (165 aa)) are Cytoplasmic-facing. A compositionally biased stretch (basic and acidic residues) spans 564-573 (EDAKDSRTTN). Residues 564–633 (EDAKDSRTTN…DPNELPSGSP (70 aa)) form a disordered region. A compositionally biased stretch (polar residues) spans 615–624 (SEGWSDTNLD).

It belongs to the peptidase A22B family. As to quaternary structure, interacts (via active sites) with FREY; the interaction stabilizes FREY1 protein and inhibits SPPL2C proteolytic activity. Post-translationally, glycosylated. Highly expressed in testis where it is primarily localised in spermatids (at protein level).

The protein localises to the endoplasmic reticulum membrane. Its function is as follows. Sperm-specific intramembrane-cleaving aspartic protease (I-CLiP) that cleaves distinct tail-anchored proteins and SNARE proteins. In elongated spermatids, modulates intracellular Ca(2+) homeostasis by controlling PLN abundance through proteolytic cleavage. During spermatogenesis, processes SNARE proteins and impacts vesicular trafficking which supports compartmental reorganization in maturating spermatids and may play a role in formation of the acrosome. In round spermatids, acts as a scaffold protein supporting FREY1 in IZUMO1 recruitment at the endoplasmic reticulum membrane and coordination of IZUMO1 complex assembly. Stabilizes FREY1 at the endoplasmic reticulum membrane through interaction. May recruit IZUMO1 interaction partners. Functionally, no difference in cleavage specificity compared to isoform 1. The polypeptide is Signal peptide peptidase-like 2C (Mus musculus (Mouse)).